Here is a 280-residue protein sequence, read N- to C-terminus: Tryptophan 2,3-dioxygenase (280 aa).

Residues Phe49–His53, Tyr111, and Arg115 each bind substrate. His238 is a binding site for heme. A substrate-binding site is contributed by Thr252.

The protein belongs to the tryptophan 2,3-dioxygenase family. In terms of assembly, homotetramer. It depends on heme as a cofactor.

It catalyses the reaction L-tryptophan + O2 = N-formyl-L-kynurenine. It functions in the pathway amino-acid degradation; L-tryptophan degradation via kynurenine pathway; L-kynurenine from L-tryptophan: step 1/2. In terms of biological role, heme-dependent dioxygenase that catalyzes the oxidative cleavage of the L-tryptophan (L-Trp) pyrrole ring and converts L-tryptophan to N-formyl-L-kynurenine. Catalyzes the oxidative cleavage of the indole moiety. The protein is Tryptophan 2,3-dioxygenase of Geobacillus thermodenitrificans (strain NG80-2).